A 500-amino-acid polypeptide reads, in one-letter code: UDP-GalNAc:beta-1,3-N-acetylgalactosaminyltransferase 2 (500 aa).

Residues 1–6 (MRNWLV) are Cytoplasmic-facing. Residues 7–23 (LLCPCVLGAALHLWLRL) form a helical; Signal-anchor for type II membrane protein membrane-spanning segment. Residues 24-500 (RSPPPACASG…CGDPCRCQAR (477 aa)) lie on the Lumenal side of the membrane. N-linked (GlcNAc...) asparagine glycosylation is found at Asn-116 and Asn-174.

Belongs to the glycosyltransferase 31 family. In terms of processing, N-glycosylated. As to expression, expressed in all tissues examined, but at highest levels in testis, adipose tissue, skeletal muscle and ovary.

It is found in the golgi apparatus membrane. The protein resides in the endoplasmic reticulum. The catalysed reaction is 3-O-(N-acetyl-beta-D-glucosaminyl-(1-&gt;4)-alpha-D-mannosyl)-L-threonyl-[protein] + UDP-N-acetyl-alpha-D-galactosamine = 3-O-[beta-D-GalNAc-(1-&gt;3)-beta-D-GlcNAc-(1-&gt;4)-alpha-D-Man]-L-Thr-[protein] + UDP + H(+). It functions in the pathway protein modification; protein glycosylation. Its function is as follows. Beta-1,3-N-acetylgalactosaminyltransferase that synthesizes a unique carbohydrate structure, GalNAc-beta-1-3GlcNAc, on N- and O-glycans. Has no galactose nor galactosaminyl transferase activity toward any acceptor substrate. Involved in alpha-dystroglycan (DAG1) glycosylation: acts coordinately with GTDC2/POMGnT2 to synthesize a GalNAc-beta3-GlcNAc-beta-terminus at the 4-position of protein O-mannose in the biosynthesis of the phosphorylated O-mannosyl trisaccharide (N-acetylgalactosamine-beta-3-N-acetylglucosamine-beta-4-(phosphate-6-)mannose), a carbohydrate structure present in alpha-dystroglycan, which is required for binding laminin G-like domain-containing extracellular proteins with high affinity. The sequence is that of UDP-GalNAc:beta-1,3-N-acetylgalactosaminyltransferase 2 (B3GALNT2) from Homo sapiens (Human).